The chain runs to 361 residues: Probable G-protein coupled receptor 25 (361 aa).

Topologically, residues 1–39 (MAPTEPWSPSPGSAPWDYSGLDGLEELELCPAGDLPYGY) are extracellular. A helical membrane pass occupies residues 40–60 (VYIPALYLAAFAVGLLGNAFV). The Cytoplasmic segment spans residues 61–75 (VWLLAGRRGPRRLVD). A helical transmembrane segment spans residues 76–96 (TFVLHLAAADLGFVLTLPLWA). Topologically, residues 97-126 (AAAALGGRWPFGDGLCKLSSFALAGTRCAG) are extracellular. A helical transmembrane segment spans residues 127 to 147 (ALLLAGMSVDRYLAVVKLLEA). Residues 148–155 (RPLRTPRC) are Cytoplasmic-facing. The chain crosses the membrane as a helical span at residues 156 to 176 (ALASCCGVWAVALLAGLPSLV). Topologically, residues 177–200 (YRGLQPLPGGQDSQCGEEPSHAFQ) are extracellular. Residues 201–220 (GLSLLLLLLTFVLPLVVTLF) traverse the membrane as a helical segment. At 221 to 242 (CYCRISRRLRRPPHVGRARRNS) the chain is on the cytoplasmic side. The chain crosses the membrane as a helical span at residues 243 to 263 (LRIIFAIESTFVGSWLPFSAL). Over 264 to 289 (RAVFHLARLGALPLPCPLLLALRWGL) the chain is Extracellular. The helical transmembrane segment at 290-310 (TIATCLAFVNSCANPLIYLLL) threads the bilayer. Residues 311–361 (DRSFRARALDGACGRTGRLARRISSASSLSRDDSSVFRCRAQAANTASASW) are Cytoplasmic-facing.

This sequence belongs to the G-protein coupled receptor 1 family.

The protein localises to the cell membrane. Orphan receptor. The sequence is that of Probable G-protein coupled receptor 25 (GPR25) from Homo sapiens (Human).